Here is a 234-residue protein sequence, read N- to C-terminus: MTRTPTGVPMHLGHTHDAPAAVSADATRPDGTRRALRIGLGGPVGSGKTATVAALCRELRDRLSIAVVTNDIYTREDADFLLKNAVLPPERIQAVETGACPHTAIRDDISANLEAVEDLEDAVGPLDLILVESGGDNLTATFSKGLVDAQIFVIDVAGGDDIPRKGGPGVTTADLLVVNKTDLAPYVGSDLERMALDAKKQRGDLPVAFTSLTSAEGVGPVADWVRAQLAAWAA.

A disordered region spans residues 1 to 29 (MTRTPTGVPMHLGHTHDAPAAVSADATRP). 42 to 49 (GPVGSGKT) contributes to the GTP binding site.

It belongs to the SIMIBI class G3E GTPase family. UreG subfamily. In terms of assembly, homodimer. UreD, UreF and UreG form a complex that acts as a GTP-hydrolysis-dependent molecular chaperone, activating the urease apoprotein by helping to assemble the nickel containing metallocenter of UreC. The UreE protein probably delivers the nickel.

It is found in the cytoplasm. Its function is as follows. Facilitates the functional incorporation of the urease nickel metallocenter. This process requires GTP hydrolysis, probably effectuated by UreG. The protein is Urease accessory protein UreG 1 of Streptomyces griseus subsp. griseus (strain JCM 4626 / CBS 651.72 / NBRC 13350 / KCC S-0626 / ISP 5235).